The following is a 733-amino-acid chain: MPPINEPTATTTSASSVWQGMTQLKSQVDLINIARGILSTPATTSTSCLDIQNSTPIIGSLASGKSQTPILTATMTPQIGLTGLGSLTSLPPELLLQFARLDGFNLLPAVGSPAIPSSSSCSEPSTSQASTVVSAPTLPPPSPLTSLPQKPAPLMPSGHVTTVDQQNRQQHQQQQRQQQQAQQQNSMARKYSMDTIQHHTMQHPHQLQYIPNHFMTASTDVFAAMDMSQKQSSPPGIFKIVAAKNEPSSSSNSQPGTPAMGDRRAVPACAICGTDSTGIHFGVDACAACSAFFRRTVVLNKDYSCNKGGKCTVVKDGSAGQKCRACRFRKCISSGMDKNSVQHRRDAIGKYSAGVKRELSPDAEFEPSAKVSTVSEPSTSSGPSGGFNQNVSSPAGIPRVPSTLRTTQASTCMNSACGQKSVLHELICRQNFLTEQRQLFYAGCLGDWFRKPSSIENQTLSELTDFSSCMFHLWKIEPRLAADFMNRNRYLDPLPIVEKLKIYRNFVIMRQSVEEPYLTWRHGGLEKRWFVMPNNTYIDFNNIAKYFENGALKDLKLDYETTTNLFLPSFTHAMDTIGEKMKKNNITETELTILLGLVLLDPGIYGIHESTRKFLKRIRDQLIHDVYMYYEDEMSHLYDPEIRMADIFMLVAAIKIHSIKTSENMHMLRVFDLIPADACFNQMLDVESVNVSPDGQKDSEAEQGPSPVSVPEAARGSYQDDDMPPVLEKNCDL.

Composition is skewed to low complexity over residues 113–130 (PAIP…SQAS) and 165–185 (QQNR…QQQN). The segment at 113-190 (PAIPSSSSCS…AQQQNSMARK (78 aa)) is disordered. Positions 266–343 (VPACAICGTD…SGMDKNSVQH (78 aa)) form a DNA-binding region, nuclear receptor. NR C4-type zinc fingers lie at residues 269 to 289 (CAIC…CAAC) and 305 to 326 (CNKG…CRAC). The tract at residues 361 to 396 (PDAEFEPSAKVSTVSEPSTSSGPSGGFNQNVSSPAG) is disordered. Low complexity predominate over residues 371–382 (VSTVSEPSTSSG). Positions 444–687 (CLGDWFRKPS…ACFNQMLDVE (244 aa)) constitute an NR LBD domain. Positions 676 to 687 (ADACFNQMLDVE) are AF-2. The disordered stretch occupies residues 691-733 (VSPDGQKDSEAEQGPSPVSVPEAARGSYQDDDMPPVLEKNCDL).

The protein belongs to the nuclear hormone receptor family. Interacts with nuclear hormone receptor nhr-49; the interaction is direct. As to expression, widely expressed, including in hypodermis, gut, muscle, and neuronal cells of the ventral nerve cord, head, and tail ganglia. Expressed in the head ganglion in several sensory and interneurons, including AVA.

The protein resides in the nucleus. Transcription factor. Binds to regulatory elements and regulates transcription of target genes, including the potassium channel accessory subunit mps-2. Negatively regulates transcription of mps-2, thereby modulating age-dependent memory decline. In concert with nuclear hormone receptor nhr-49, involved in regulating target genes with roles in sphingolipid breakdown and lipid remodeling. Plays a role in modulating mitochondrial morphology and function. This chain is Nuclear hormone receptor family member nhr-66, found in Caenorhabditis elegans.